Here is a 407-residue protein sequence, read N- to C-terminus: Argininosuccinate synthase (407 aa).

Residues 12–20 (AYSGGLDTS) and alanine 39 contribute to the ATP site. Tyrosine 92 and serine 97 together coordinate L-citrulline. Glycine 122 serves as a coordination point for ATP. L-aspartate-binding residues include threonine 124, asparagine 128, and aspartate 129. Asparagine 128 lines the L-citrulline pocket. Residues arginine 132, serine 183, serine 192, glutamate 268, and tyrosine 280 each coordinate L-citrulline.

Belongs to the argininosuccinate synthase family. Type 1 subfamily. Homotetramer.

It is found in the cytoplasm. The catalysed reaction is L-citrulline + L-aspartate + ATP = 2-(N(omega)-L-arginino)succinate + AMP + diphosphate + H(+). It participates in amino-acid biosynthesis; L-arginine biosynthesis; L-arginine from L-ornithine and carbamoyl phosphate: step 2/3. In Caulobacter sp. (strain K31), this protein is Argininosuccinate synthase.